We begin with the raw amino-acid sequence, 189 residues long: Large ribosomal subunit protein uL5 (189 aa).

Belongs to the universal ribosomal protein uL5 family. Part of the 50S ribosomal subunit; part of the 5S rRNA/L5/L18/L25 subcomplex. Contacts the 5S rRNA and the P site tRNA. Forms a bridge to the 30S subunit in the 70S ribosome.

Functionally, this is one of the proteins that bind and probably mediate the attachment of the 5S RNA into the large ribosomal subunit, where it forms part of the central protuberance. In the 70S ribosome it contacts protein S13 of the 30S subunit (bridge B1b), connecting the 2 subunits; this bridge is implicated in subunit movement. Contacts the P site tRNA; the 5S rRNA and some of its associated proteins might help stabilize positioning of ribosome-bound tRNAs. This chain is Large ribosomal subunit protein uL5, found in Salinispora tropica (strain ATCC BAA-916 / DSM 44818 / JCM 13857 / NBRC 105044 / CNB-440).